The following is a 534-amino-acid chain: Ankyrin repeat and LEM domain-containing protein 1 (534 aa).

ANK repeat units lie at residues 4–35, 39–71, 75–104, and 108–137; these read TACL…DPNL, DGAA…DPNA, EGLT…DPTL, and DGLR…PTQP. Residues 279-323 enclose the LEM domain; sequence HSSVPPMSDLQLLQALRALGYSPGPVTPFTRGHYLRRLQEAQASR. One can recognise a GIY-YIG domain in the interval 370–485; that stretch reads KSSFTYLLLD…ALGLQTLTNQ (116 aa). Residues 498–505 carry the Nuclear localization signal motif; that stretch reads PPSRRRRL.

As to quaternary structure, interacts (via LEM domain) with BANF1; the interaction may favor BANF1 dimerization. As to expression, predominantly expressed in bone marrow, spleen, thymus, colon and ovary. Expressed also to a lesser extent in lymph nodes, liver and testis.

The protein localises to the cytoplasm. Its subcellular location is the nucleus. Functionally, endonuclease that probably plays a role in the DNA damage response and DNA repair. The polypeptide is Ankyrin repeat and LEM domain-containing protein 1 (Mus musculus (Mouse)).